Here is a 701-residue protein sequence, read N- to C-terminus: DNA ligase (701 aa).

Residues 58-62, 107-108, and glutamate 138 contribute to the NAD(+) site; these read DYEYD and SL. Lysine 140 functions as the N6-AMP-lysine intermediate in the catalytic mechanism. Residues arginine 161, glutamate 199, lysine 323, and lysine 347 each coordinate NAD(+). Cysteine 441, cysteine 444, cysteine 459, and cysteine 464 together coordinate Zn(2+). Residues 621-701 form the BRCT domain; sequence EKRGKLAGLN…EEFLKMIGQQ (81 aa).

Belongs to the NAD-dependent DNA ligase family. LigA subfamily. The cofactor is Mg(2+). Mn(2+) serves as cofactor.

The catalysed reaction is NAD(+) + (deoxyribonucleotide)n-3'-hydroxyl + 5'-phospho-(deoxyribonucleotide)m = (deoxyribonucleotide)n+m + AMP + beta-nicotinamide D-nucleotide.. Functionally, DNA ligase that catalyzes the formation of phosphodiester linkages between 5'-phosphoryl and 3'-hydroxyl groups in double-stranded DNA using NAD as a coenzyme and as the energy source for the reaction. It is essential for DNA replication and repair of damaged DNA. The protein is DNA ligase of Sulfurihydrogenibium azorense (strain DSM 15241 / OCM 825 / Az-Fu1).